A 186-amino-acid polypeptide reads, in one-letter code: Adenine phosphoribosyltransferase (186 aa).

This sequence belongs to the purine/pyrimidine phosphoribosyltransferase family. As to quaternary structure, homodimer.

The protein localises to the cytoplasm. The enzyme catalyses AMP + diphosphate = 5-phospho-alpha-D-ribose 1-diphosphate + adenine. It participates in purine metabolism; AMP biosynthesis via salvage pathway; AMP from adenine: step 1/1. Its function is as follows. Catalyzes a salvage reaction resulting in the formation of AMP, that is energically less costly than de novo synthesis. In Xanthomonas euvesicatoria pv. vesicatoria (strain 85-10) (Xanthomonas campestris pv. vesicatoria), this protein is Adenine phosphoribosyltransferase.